We begin with the raw amino-acid sequence, 396 residues long: Elongation factor Tu (396 aa).

Residues 10–206 form the tr-type G domain; sequence KPHCNIGTIG…AVDAYIPQPE (197 aa). Positions 19–26 are G1; it reads GHVDHGKT. 19–26 is a binding site for GTP; it reads GHVDHGKT. Threonine 26 is a binding site for Mg(2+). The segment at 60–64 is G2; it reads GITIS. Residues 81 to 84 are G3; it reads DCPG. GTP is bound by residues 81 to 85 and 136 to 139; these read DCPGH and NKVD. The G4 stretch occupies residues 136-139; it reads NKVD. The G5 stretch occupies residues 174–176; it reads SAL.

This sequence belongs to the TRAFAC class translation factor GTPase superfamily. Classic translation factor GTPase family. EF-Tu/EF-1A subfamily. Monomer.

Its subcellular location is the cytoplasm. The enzyme catalyses GTP + H2O = GDP + phosphate + H(+). In terms of biological role, GTP hydrolase that promotes the GTP-dependent binding of aminoacyl-tRNA to the A-site of ribosomes during protein biosynthesis. The chain is Elongation factor Tu from Granulibacter bethesdensis (strain ATCC BAA-1260 / CGDNIH1).